Here is a 317-residue protein sequence, read N- to C-terminus: Transaldolase (317 aa).

K132 serves as the catalytic Schiff-base intermediate with substrate.

This sequence belongs to the transaldolase family. Type 1 subfamily. Homodimer.

It localises to the cytoplasm. The enzyme catalyses D-sedoheptulose 7-phosphate + D-glyceraldehyde 3-phosphate = D-erythrose 4-phosphate + beta-D-fructose 6-phosphate. It functions in the pathway carbohydrate degradation; pentose phosphate pathway; D-glyceraldehyde 3-phosphate and beta-D-fructose 6-phosphate from D-ribose 5-phosphate and D-xylulose 5-phosphate (non-oxidative stage): step 2/3. In terms of biological role, transaldolase is important for the balance of metabolites in the pentose-phosphate pathway. The sequence is that of Transaldolase from Shewanella amazonensis (strain ATCC BAA-1098 / SB2B).